The sequence spans 359 residues: CDP-glucose 4,6-dehydratase (359 aa).

It belongs to the NAD(P)-dependent epimerase/dehydratase family. NAD(+) serves as cofactor.

The enzyme catalyses CDP-D-glucose = CDP-4-dehydro-6-deoxy-D-glucose + H2O. It functions in the pathway nucleotide-sugar biosynthesis; CDP-3,6-dideoxy-D-mannose biosynthesis; CDP-3,6-dideoxy-D-mannose from CTP and alpha-D-glucose 1-phosphate: step 2/5. It participates in bacterial outer membrane biogenesis; LPS O-antigen biosynthesis. The chain is CDP-glucose 4,6-dehydratase (rfbG) from Salmonella typhimurium (strain LT2 / SGSC1412 / ATCC 700720).